Reading from the N-terminus, the 347-residue chain is Holliday junction branch migration complex subunit RuvB (347 aa).

Positions 13-195 are large ATPase domain (RuvB-L); sequence NEDAVTSGEV…FGIVEHMQYY (183 aa). ATP-binding positions include L34, R35, G76, K79, T80, T81, 142-144, R185, Y195, and R232; that span reads EDY. T80 contributes to the Mg(2+) binding site. Residues 196 to 266 form a small ATPAse domain (RuvB-S) region; that stretch reads TIDELEKIVQ…TTEGALKQLQ (71 aa). Residues 269–347 form a head domain (RuvB-H) region; that stretch reads DEGLDQTDRR…QLGLPVPGDK (79 aa). R329 is a binding site for DNA.

Belongs to the RuvB family. As to quaternary structure, homohexamer. Forms an RuvA(8)-RuvB(12)-Holliday junction (HJ) complex. HJ DNA is sandwiched between 2 RuvA tetramers; dsDNA enters through RuvA and exits via RuvB. An RuvB hexamer assembles on each DNA strand where it exits the tetramer. Each RuvB hexamer is contacted by two RuvA subunits (via domain III) on 2 adjacent RuvB subunits; this complex drives branch migration. In the full resolvosome a probable DNA-RuvA(4)-RuvB(12)-RuvC(2) complex forms which resolves the HJ.

The protein localises to the cytoplasm. It carries out the reaction ATP + H2O = ADP + phosphate + H(+). Its function is as follows. The RuvA-RuvB-RuvC complex processes Holliday junction (HJ) DNA during genetic recombination and DNA repair, while the RuvA-RuvB complex plays an important role in the rescue of blocked DNA replication forks via replication fork reversal (RFR). RuvA specifically binds to HJ cruciform DNA, conferring on it an open structure. The RuvB hexamer acts as an ATP-dependent pump, pulling dsDNA into and through the RuvAB complex. RuvB forms 2 homohexamers on either side of HJ DNA bound by 1 or 2 RuvA tetramers; 4 subunits per hexamer contact DNA at a time. Coordinated motions by a converter formed by DNA-disengaged RuvB subunits stimulates ATP hydrolysis and nucleotide exchange. Immobilization of the converter enables RuvB to convert the ATP-contained energy into a lever motion, pulling 2 nucleotides of DNA out of the RuvA tetramer per ATP hydrolyzed, thus driving DNA branch migration. The RuvB motors rotate together with the DNA substrate, which together with the progressing nucleotide cycle form the mechanistic basis for DNA recombination by continuous HJ branch migration. Branch migration allows RuvC to scan DNA until it finds its consensus sequence, where it cleaves and resolves cruciform DNA. The chain is Holliday junction branch migration complex subunit RuvB from Lactobacillus helveticus (strain DPC 4571).